Consider the following 286-residue polypeptide: DNA-directed RNA polymerase subunit Rpo3 (286 aa).

Belongs to the archaeal Rpo3/eukaryotic RPB3 RNA polymerase subunit family. In terms of assembly, part of the RNA polymerase complex.

It is found in the cytoplasm. It catalyses the reaction RNA(n) + a ribonucleoside 5'-triphosphate = RNA(n+1) + diphosphate. DNA-dependent RNA polymerase (RNAP) catalyzes the transcription of DNA into RNA using the four ribonucleoside triphosphates as substrates. The chain is DNA-directed RNA polymerase subunit Rpo3 from Aeropyrum pernix (strain ATCC 700893 / DSM 11879 / JCM 9820 / NBRC 100138 / K1).